We begin with the raw amino-acid sequence, 910 residues long: Harmonin (910 aa).

Positions 1 to 86 (MDRKVAREFR…LTPRRSRKLK (86 aa)) are N-terminal domain. PDZ domains lie at 87 to 171 (EVRL…GLIP) and 211 to 295 (KVFI…AGRE). A mediates interaction with MYO7B region spans residues 194 to 833 (GVRGGLGSPG…KAWNQGGDWI (640 aa)). Serine 219 is modified (phosphoserine). 2 coiled-coil regions span residues 299 to 377 (TDRE…WEED) and 417 to 482 (TIRK…DLEE). Residues 563 to 688 (VMPHPPSVNS…PPRGPGVSTI (126 aa)) are disordered. Positions 564–582 (MPHPPSVNSPSKVPAPPVL) are enriched in pro residues. Over residues 583-596 (PSSGHVSSSSSPWV) the composition is skewed to low complexity. Positions 599–611 (TPPPIPIPPPPSI) are enriched in pro residues. Over residues 650–664 (NTHSGKPSSSPTTER) the composition is skewed to polar residues. One can recognise a PDZ 3 domain in the interval 752–839 (DVRLLRIKKE…GDWIDLVVAV (88 aa)). A disordered region spans residues 890 to 910 (KSRERNQTDPSWRPASSAPSP). Over residues 899-910 (PSWRPASSAPSP) the composition is skewed to low complexity.

In terms of assembly, part of the IMAC/intermicrovillar adhesion complex/intermicrovillar tip-link complex composed of ANKS4B, MYO7B, USH1C, CDHR2 and CDHR5. Part of a complex composed of USH1C, USH1G and MYO7A. Interacts with F-actin. Interacts with USH2A. Interacts with SLC4A7. Interacts (via PDZ1 domain) with the C-terminus of USHBP1. Interacts (via N-terminus and PDZ 2 domain) with CDH23. Interacts with USH1G. Interacts with MYO7B. Interacts with CDHR2 and CDHR5; may mediate their interaction with MYO7B at the microvilli tip. Interacts (via PDZ 1 domain) with ANKS4B. Interacts (via PDZ 1 domain) with DOCK4. In terms of tissue distribution, detected in stereocilia of cochlear hair cells (at protein level). Isoform 1 is expressed in the eye, cochlea, vestibule, heart, kidney, small intestine and testis; it is barely visible in skeletal muscle, liver, and lung and is absent from the brain. Isoforms 2 and 3 are expressed in the cochlea and vestibule.

The protein localises to the cytoplasm. The protein resides in the cytosol. It localises to the cytoskeleton. Its subcellular location is the cell projection. It is found in the microvillus. Anchoring/scaffolding protein that is a part of the functional network formed by USH1C, USH1G, CDH23 and MYO7A that mediates mechanotransduction in cochlear hair cells. Required for normal development and maintenance of cochlear hair cell bundles. As part of the intermicrovillar adhesion complex/IMAC plays a role in brush border differentiation, controlling microvilli organization and length. Probably plays a central regulatory role in the assembly of the complex, recruiting CDHR2, CDHR5 and MYO7B to the microvilli tips. In Mus musculus (Mouse), this protein is Harmonin (Ush1c).